Consider the following 583-residue polypeptide: Isocitrate dehydrogenase kinase/phosphatase (583 aa).

ATP is bound by residues 315-321 and lysine 336; that span reads APGIRGM. The active site involves aspartate 371.

This sequence belongs to the AceK family.

The protein resides in the cytoplasm. It carries out the reaction L-seryl-[isocitrate dehydrogenase] + ATP = O-phospho-L-seryl-[isocitrate dehydrogenase] + ADP + H(+). Its function is as follows. Bifunctional enzyme which can phosphorylate or dephosphorylate isocitrate dehydrogenase (IDH) on a specific serine residue. This is a regulatory mechanism which enables bacteria to bypass the Krebs cycle via the glyoxylate shunt in response to the source of carbon. When bacteria are grown on glucose, IDH is fully active and unphosphorylated, but when grown on acetate or ethanol, the activity of IDH declines drastically concomitant with its phosphorylation. The polypeptide is Isocitrate dehydrogenase kinase/phosphatase (Salmonella heidelberg (strain SL476)).